The following is a 231-amino-acid chain: Large ribosomal subunit protein uL1 (231 aa).

Belongs to the universal ribosomal protein uL1 family. As to quaternary structure, part of the 50S ribosomal subunit.

Its function is as follows. Binds directly to 23S rRNA. The L1 stalk is quite mobile in the ribosome, and is involved in E site tRNA release. Protein L1 is also a translational repressor protein, it controls the translation of the L11 operon by binding to its mRNA. This Alkalilimnicola ehrlichii (strain ATCC BAA-1101 / DSM 17681 / MLHE-1) protein is Large ribosomal subunit protein uL1.